The following is a 387-amino-acid chain: MASILQAIRYSHGKLAIIDQLQLPYVEKFITIRTSEDAWHAIKEMRVRGAPAIAIVAALALASELNTLIIHDKLSSRAEEVKLFIREKLDYLVSSRPTAVNLSDAARKLESTISGHADTPGATGRTVAEAFIRAAEEMMTKDLDDNMKIGQNGAEWIIKHALARHKSTATVLTHCNTGSLATSGYGTALGVIRSLASKKALEHAYCTETRPYNQGSRLTAFELVHDRLPATLITDSMVAALLASTKAEVDAIVVGADRVAANGDTANKIGTYGLAVLAKYHGVKFLVAAPLTTIDLGTKSGEDIVIEERPSAEVTKIRGPVDGDHPADIVKLETVHIAAKGIDVWNPAFDVTPSTLIDGIITEVGVIEKEADGQFHLERLFIDNSAS.

The active-site Proton donor is Asp-257.

This sequence belongs to the eIF-2B alpha/beta/delta subunits family. MtnA subfamily.

The protein localises to the cytoplasm. Its subcellular location is the nucleus. It carries out the reaction 5-(methylsulfanyl)-alpha-D-ribose 1-phosphate = 5-(methylsulfanyl)-D-ribulose 1-phosphate. It functions in the pathway amino-acid biosynthesis; L-methionine biosynthesis via salvage pathway; L-methionine from S-methyl-5-thio-alpha-D-ribose 1-phosphate: step 1/6. Functionally, catalyzes the interconversion of methylthioribose-1-phosphate (MTR-1-P) into methylthioribulose-1-phosphate (MTRu-1-P). The sequence is that of Methylthioribose-1-phosphate isomerase (mri1) from Aspergillus fumigatus (strain CBS 144.89 / FGSC A1163 / CEA10) (Neosartorya fumigata).